The sequence spans 565 residues: Formate--tetrahydrofolate ligase (565 aa).

67–74 (TPLGEGKT) serves as a coordination point for ATP.

It belongs to the formate--tetrahydrofolate ligase family.

It carries out the reaction (6S)-5,6,7,8-tetrahydrofolate + formate + ATP = (6R)-10-formyltetrahydrofolate + ADP + phosphate. Its pathway is one-carbon metabolism; tetrahydrofolate interconversion. This chain is Formate--tetrahydrofolate ligase, found in Saccharopolyspora erythraea (strain ATCC 11635 / DSM 40517 / JCM 4748 / NBRC 13426 / NCIMB 8594 / NRRL 2338).